Here is a 141-residue protein sequence, read N- to C-terminus: Ribonuclease P protein component (141 aa).

Belongs to the RnpA family. As to quaternary structure, consists of a catalytic RNA component (M1 or rnpB) and a protein subunit.

The enzyme catalyses Endonucleolytic cleavage of RNA, removing 5'-extranucleotides from tRNA precursor.. In terms of biological role, RNaseP catalyzes the removal of the 5'-leader sequence from pre-tRNA to produce the mature 5'-terminus. It can also cleave other RNA substrates such as 4.5S RNA. The protein component plays an auxiliary but essential role in vivo by binding to the 5'-leader sequence and broadening the substrate specificity of the ribozyme. This is Ribonuclease P protein component from Onion yellows phytoplasma (strain OY-M).